The chain runs to 488 residues: Peptidoglycan endopeptidase LytF (488 aa).

The first 26 residues, 1 to 26, serve as a signal peptide directing secretion; sequence MKKKLAAGLTASAIVGTTLVVTPAEA. LysM domains are found at residues 27–70 and 92–135; these read ATIK…TLTI and SVYT…KLKV. Disordered regions lie at residues 70-93, 137-176, and 218-239; these read IPGS…GSSV, GTVS…TGTY, and KSSG…TSAT. Low complexity-rich tracts occupy residues 72–93 and 140–172; these read GSKS…GSSV and SSSS…SSSS. The LysM 3 domain maps to 174–217; sequence GTYKVQLGDSLWKIANKVNMSIAELKVLNNLKSDTIYVNQVLKT. In terms of domain architecture, LysM 4 spans 240-283; it reads TKYTVKSGDSLWKIANNYNLTVQQIRNINNLKSDVLYVGQVLKL. The disordered stretch occupies residues 286 to 306; that stretch reads KASSGSSSSSSSSSNASSGTT. Residues 307-350 enclose the LysM 5 domain; sequence TTYTVKSGDSLWVIAQKFNVTAQQIREKNNLKTDVLQVGQKLVI. In terms of domain architecture, NlpC/P60 spans 370–488; that stretch reads SAKINTMISA…QRYLGAKRYF (119 aa). The active-site Nucleophile is cysteine 400. The active-site Proton acceptor is the histidine 449. Residue asparagine 461 is part of the active site.

The protein belongs to the peptidase C40 family.

It localises to the secreted. It is found in the cell wall. With respect to regulation, is inhibited in vitro by para-hydroxymercuribenzoate, a sulfydryl inhibitor. Its function is as follows. Cell wall hydrolase that cleaves gamma-D-glutamate-meso-diaminopimelate bonds in peptidoglycan. LytF is necessary and sufficient for vegetative daughter cell separation, and also seems to play a role in cell autolysis. The sequence is that of Peptidoglycan endopeptidase LytF (lytF) from Bacillus subtilis (strain 168).